The following is a 226-amino-acid chain: Gap junction beta-2 protein (226 aa).

An intramembrane segment occupies 2 to 13 (DWGTLQTILGGV). Topologically, residues 14 to 20 (NKHSTSI) are cytoplasmic. Residues 21–40 (GKIWLTVLFIFRIMILVVAA) form a helical membrane-spanning segment. Residues 41–73 (KEVWGDEQADFVCNTLQPGCKNVCYDHYFPISH) lie on the Extracellular side of the membrane. Ca(2+)-binding residues include Glu42, Gly45, and Glu47. 3 disulfide bridges follow: Cys53–Cys180, Cys60–Cys174, and Cys64–Cys169. The helical transmembrane segment at 74-94 (IRLWALQLIFVSTPALLVAMH) threads the bilayer. Over 95–135 (VAYRRHEKKRKFIKGEIKSEFKDIEEIKTQKVRIEGSLWWT) the chain is Cytoplasmic. The helical transmembrane segment at 136–156 (YTSSIFFRVIFEAAFMYVFYV) threads the bilayer. Topologically, residues 157-189 (MYDGFSMQRLVKCNAWPCPNTVDCFVSRPTEKT) are extracellular. The helical transmembrane segment at 190–210 (VFTVFMIAVSGICILLNVTEL) threads the bilayer. Over 211–226 (CYLLIRYCSGKSKKPV) the chain is Cytoplasmic.

Belongs to the connexin family. Beta-type (group I) subfamily. As to quaternary structure, a hemichannel or connexon is composed of a hexamer of connexins. A functional gap junction is formed by the apposition of two hemichannels. Forms heteromeric channels with GJB4. Interacts with CNST.

Its subcellular location is the cell membrane. It localises to the cell junction. The protein resides in the gap junction. In terms of biological role, structural component of gap junctions. Gap junctions are dodecameric channels that connect the cytoplasm of adjoining cells. They are formed by the docking of two hexameric hemichannels, one from each cell membrane. Small molecules and ions diffuse from one cell to a neighboring cell via the central pore. In Gorilla gorilla gorilla (Western lowland gorilla), this protein is Gap junction beta-2 protein (GJB2).